The sequence spans 338 residues: Popeye domain-containing protein 1 (338 aa).

Topologically, residues 1–40 (MATESILITTLPMDLNSQINNVTFGLNENETLCENWREIH) are extracellular. Asn-21 and Asn-29 each carry an N-linked (GlcNAc...) asparagine glycan. A helical membrane pass occupies residues 41 to 61 (HLVFHLANTCFAAGLVIPSTL). The Cytoplasmic segment spans residues 62–65 (NLHM). Residues 66–86 (ILLRGMLCLGCIFFIIWAILF) form a helical membrane-spanning segment. Over 87-91 (RCALD) the chain is Extracellular. The chain crosses the membrane as a helical span at residues 92–112 (IMIWNATFLSMNFMHFIYLVY). Residues 113–338 (KKRPIKIEKD…VGPLSHAVFC (226 aa)) are Cytoplasmic-facing.

It belongs to the popeye family.

The protein localises to the lateral cell membrane. It localises to the cell junction. It is found in the tight junction. The protein resides in the membrane. Its subcellular location is the cell membrane. The protein localises to the sarcolemma. It localises to the caveola. Cell adhesion molecule involved in the establishment and/or maintenance of cell integrity. May play a role in vamp3-mediated vesicular transport and recycling of different receptor molecules. May be involved in the formation and regulation of the tight junction (TJ) paracellular permeability barrier in epithelial cells. May induce primordial adhesive contact and aggregation of epithelial cells in a Ca(2+)-independent manner. May be involved in epithelial movement during corneal sheet formation and regeneration. May play a role in the regulation of cell shape and movement by modulating the Rho-GTPase activity. May be involved in skeletal muscle and heart development as well as in the maintenance of heart function. May also be involved in striated muscle regeneration and in the regulation of cell spreading. This is Popeye domain-containing protein 1 (popdc1) from Xenopus tropicalis (Western clawed frog).